The following is a 354-amino-acid chain: Protein RecA (354 aa).

67–74 serves as a coordination point for ATP; it reads GPESSGKT. Positions 331-354 are disordered; that stretch reads NQDSTPDFSVDDNGEGVKETNEDF. Basic and acidic residues predominate over residues 345–354; it reads EGVKETNEDF.

Belongs to the RecA family.

It localises to the cytoplasm. Can catalyze the hydrolysis of ATP in the presence of single-stranded DNA, the ATP-dependent uptake of single-stranded DNA by duplex DNA, and the ATP-dependent hybridization of homologous single-stranded DNAs. It interacts with LexA causing its activation and leading to its autocatalytic cleavage. The polypeptide is Protein RecA (Citrobacter koseri (strain ATCC BAA-895 / CDC 4225-83 / SGSC4696)).